A 524-amino-acid chain; its full sequence is Thermosome subunit 3 (524 aa).

The protein belongs to the TCP-1 chaperonin family. The thermosome or CCT complex is a oligomeric complex of two octameric double-ring structures; the complex is probably a heterooligomer of CCT1, CCT2 and CCT3 with yet unknown stoichiometry.

Functionally, molecular chaperone that assists in the folding or refolding of nascent or denatured proteins along with ATP hydrolysis. ATPase activity is highest in thermosome assemblies containing CCT1:CCT2, followed by assemblies containing CCT1:CCT2:CCT3. Not required for thermosome ATPase activity. Not required for growth. The chain is Thermosome subunit 3 (cct3) from Haloferax volcanii (strain ATCC 29605 / DSM 3757 / JCM 8879 / NBRC 14742 / NCIMB 2012 / VKM B-1768 / DS2) (Halobacterium volcanii).